Here is a 172-residue protein sequence, read N- to C-terminus: NAD(P)H-quinone oxidoreductase subunit I, chloroplastic (172 aa).

4Fe-4S ferredoxin-type domains lie at 55–84 (GRIH…VDWK) and 95–124 (LNYS…MTEE). Cysteine 64, cysteine 67, cysteine 70, cysteine 74, cysteine 104, cysteine 107, cysteine 110, and cysteine 114 together coordinate [4Fe-4S] cluster.

Belongs to the complex I 23 kDa subunit family. As to quaternary structure, NDH is composed of at least 16 different subunits, 5 of which are encoded in the nucleus. [4Fe-4S] cluster serves as cofactor.

Its subcellular location is the plastid. The protein resides in the chloroplast thylakoid membrane. The catalysed reaction is a plastoquinone + NADH + (n+1) H(+)(in) = a plastoquinol + NAD(+) + n H(+)(out). It catalyses the reaction a plastoquinone + NADPH + (n+1) H(+)(in) = a plastoquinol + NADP(+) + n H(+)(out). NDH shuttles electrons from NAD(P)H:plastoquinone, via FMN and iron-sulfur (Fe-S) centers, to quinones in the photosynthetic chain and possibly in a chloroplast respiratory chain. The immediate electron acceptor for the enzyme in this species is believed to be plastoquinone. Couples the redox reaction to proton translocation, and thus conserves the redox energy in a proton gradient. The chain is NAD(P)H-quinone oxidoreductase subunit I, chloroplastic from Olimarabidopsis pumila (Dwarf rocket).